A 329-amino-acid polypeptide reads, in one-letter code: GTP 3',8-cyclase (329 aa).

Residues 1–229 (MNQVDYLRIS…EGYVRGNGPA (229 aa)) enclose the Radical SAM core domain. Residue Arg-8 participates in GTP binding. Residues Cys-15 and Cys-19 each coordinate [4Fe-4S] cluster. Tyr-21 is a binding site for S-adenosyl-L-methionine. Cys-22 lines the [4Fe-4S] cluster pocket. Arg-60 lines the GTP pocket. Position 64 (Gly-64) interacts with S-adenosyl-L-methionine. Thr-91 is a GTP binding site. Ser-115 provides a ligand contact to S-adenosyl-L-methionine. Lys-155 contacts GTP. Position 189 (Met-189) interacts with S-adenosyl-L-methionine. 2 residues coordinate [4Fe-4S] cluster: Cys-252 and Cys-255. A GTP-binding site is contributed by 257–259 (RVR). Residue Cys-269 coordinates [4Fe-4S] cluster.

This sequence belongs to the radical SAM superfamily. MoaA family. Monomer and homodimer. It depends on [4Fe-4S] cluster as a cofactor.

It carries out the reaction GTP + AH2 + S-adenosyl-L-methionine = (8S)-3',8-cyclo-7,8-dihydroguanosine 5'-triphosphate + 5'-deoxyadenosine + L-methionine + A + H(+). It functions in the pathway cofactor biosynthesis; molybdopterin biosynthesis. Functionally, catalyzes the cyclization of GTP to (8S)-3',8-cyclo-7,8-dihydroguanosine 5'-triphosphate. The sequence is that of GTP 3',8-cyclase from Cyanothece sp. (strain PCC 7425 / ATCC 29141).